A 71-amino-acid chain; its full sequence is Small ribosomal subunit protein bS18 (71 aa).

It belongs to the bacterial ribosomal protein bS18 family. In terms of assembly, part of the 30S ribosomal subunit. Forms a tight heterodimer with protein bS6.

Functionally, binds as a heterodimer with protein bS6 to the central domain of the 16S rRNA, where it helps stabilize the platform of the 30S subunit. In Dichelobacter nodosus (strain VCS1703A), this protein is Small ribosomal subunit protein bS18.